Here is a 395-residue protein sequence, read N- to C-terminus: Flagellin A (395 aa).

The protein belongs to the bacterial flagellin family.

It is found in the secreted. It localises to the bacterial flagellum. Its function is as follows. Flagellin is the subunit protein which polymerizes to form the filaments of bacterial flagella. Homomer of FlaA is able to form a functional filament. The sequence is that of Flagellin A (flaA) from Rhizobium meliloti (Ensifer meliloti).